The following is a 46-amino-acid chain: Large ribosomal subunit protein bL36B (46 aa).

Belongs to the bacterial ribosomal protein bL36 family.

This Cronobacter sakazakii (strain ATCC BAA-894) (Enterobacter sakazakii) protein is Large ribosomal subunit protein bL36B.